The sequence spans 296 residues: Protoheme IX farnesyltransferase (296 aa).

The Cytoplasmic portion of the chain corresponds to 1–9; sequence MMFKQYLQV. The helical transmembrane segment at 10-28 threads the bilayer; sequence TKPGIIFGNLISVIGGFLL. Topologically, residues 29–37 are periplasmic; sequence ASKGSIDYP. Residues 38-56 traverse the membrane as a helical segment; that stretch reads LFIYTLVGVSLVVASGCVF. Over 57 to 78 the chain is Cytoplasmic; it reads NNYIDRDIDRKMERTKNRVLVK. A helical membrane pass occupies residues 79-97; that stretch reads GLISPAVSLVYATLLGIAG. The Periplasmic segment spans residues 98–107; sequence FMLLWFGANP. The helical transmembrane segment at 108–126 threads the bilayer; it reads LACWLGVMGFVVYVGVYSL. Topologically, residues 127–197 are cytoplasmic; sequence YMKRHSVYGT…YQAANIPVLP (71 aa). The chain crosses the membrane as a helical span at residues 198 to 216; sequence VVKGISVAKNHITLYIIAF. Residues 217–228 are Periplasmic-facing; it reads AVATLMLSLGGY. A helical membrane pass occupies residues 229–247; the sequence is AGYKYLVVAAAVSVWWLGM. Over 248–268 the chain is Cytoplasmic; the sequence is ALRGYKVADDRIWARKLFGFS. A helical transmembrane segment spans residues 269-287; sequence IIAITALSVMMSVDFMVPD. At 288–296 the chain is on the periplasmic side; the sequence is SHTLLAAVW.

It belongs to the UbiA prenyltransferase family. Protoheme IX farnesyltransferase subfamily.

Its subcellular location is the cell inner membrane. The enzyme catalyses heme b + (2E,6E)-farnesyl diphosphate + H2O = Fe(II)-heme o + diphosphate. It functions in the pathway porphyrin-containing compound metabolism; heme O biosynthesis; heme O from protoheme: step 1/1. In terms of biological role, converts heme B (protoheme IX) to heme O by substitution of the vinyl group on carbon 2 of heme B porphyrin ring with a hydroxyethyl farnesyl side group. This is Protoheme IX farnesyltransferase from Shigella flexneri.